Reading from the N-terminus, the 95-residue chain is Heteroscorpine-1 (95 aa).

The first 19 residues, 1-19, serve as a signal peptide directing secretion; the sequence is MNSKLTALIFLGLVAIASC. Positions 55 to 95 constitute a BetaSPN-type CS-alpha/beta domain; the sequence is EFQCVANIDTMGNCETHCQKTSGEKGFCHGTKCKCGKPLSY. Disulfide bonds link Cys58/Cys82, Cys68/Cys87, and Cys72/Cys89.

The protein belongs to the long chain scorpion toxin family. Class 3 subfamily. In terms of processing, contains 3 disulfide bonds. Expressed by the venom gland.

Its subcellular location is the secreted. Has antibacterial activity against B.subtilis, K.pneumoniae and P.aeruginosa. This is Heteroscorpine-1 from Heterometrus laoticus (Thai giant scorpion).